Here is a 466-residue protein sequence, read N- to C-terminus: Probable aminotransferase Rv3329 (466 aa).

At Lys294 the chain carries N6-(pyridoxal phosphate)lysine.

It belongs to the class-III pyridoxal-phosphate-dependent aminotransferase family. Pyridoxal 5'-phosphate serves as cofactor.

Functionally, probable aminotransferase. The polypeptide is Probable aminotransferase Rv3329 (Mycobacterium tuberculosis (strain ATCC 25618 / H37Rv)).